The chain runs to 184 residues: Photosystem I assembly protein Ycf4 (184 aa).

A run of 2 helical transmembrane segments spans residues 22-42 and 57-77; these read FCWA…GTSS and ILFF…LFIS.

The protein belongs to the Ycf4 family.

The protein resides in the plastid. Its subcellular location is the chloroplast thylakoid membrane. In terms of biological role, seems to be required for the assembly of the photosystem I complex. The sequence is that of Photosystem I assembly protein Ycf4 from Phalaenopsis aphrodite subsp. formosana (Moth orchid).